Reading from the N-terminus, the 898-residue chain is Pyruvate, phosphate dikinase (898 aa).

The segment at 1 to 355 (MAKWVYTFGA…LWMLQTRSGK (355 aa)) is N-terminal. Arginine 96 contacts ATP. The linker 1 stretch occupies residues 356–412 (RTAKSALKIAVDMAEEGLISKEEAVARIDPASLDQLLHPTIDPHARRDIIGSGLPAS). A central region spans residues 413-511 (PGAATGEIVF…TLRKGDVITI (99 aa)). Threonine 466 carries the post-translational modification Phosphothreonine; by PDRP1. The active-site Tele-phosphohistidine intermediate is the histidine 468. Residues 512–546 (DGSSGQVLKGEIPMLQPELSGDFGKIMQWADASRR) are linker 2. The interval 547–898 (MTVRTNAETP…VAEVQALAAS (352 aa)) is C-terminal. Substrate contacts are provided by arginine 574, arginine 630, glutamate 758, glycine 779, threonine 780, asparagine 781, and aspartate 782. Residue glutamate 758 participates in Mg(2+) binding. Aspartate 782 contributes to the Mg(2+) binding site. Catalysis depends on cysteine 844, which acts as the Proton donor.

Belongs to the PEP-utilizing enzyme family. Homodimer. The cofactor is Mg(2+). Post-translationally, phosphorylation of Thr-466 in the dark inactivates the enzyme. Dephosphorylation upon light stimulation reactivates the enzyme.

It catalyses the reaction pyruvate + phosphate + ATP = phosphoenolpyruvate + AMP + diphosphate + H(+). With respect to regulation, activated by light-induced dephosphorylation. Inhibited by dark-induced phosphorylation. Both reactions are catalyzed by PDRP1. Its function is as follows. Catalyzes the reversible phosphorylation of pyruvate and phosphate. The chain is Pyruvate, phosphate dikinase (ppdK) from Rhizobium meliloti (strain 1021) (Ensifer meliloti).